We begin with the raw amino-acid sequence, 132 residues long: Small ribosomal subunit protein uS8 (132 aa).

It belongs to the universal ribosomal protein uS8 family. As to quaternary structure, part of the 30S ribosomal subunit. Contacts proteins S5 and S12.

One of the primary rRNA binding proteins, it binds directly to 16S rRNA central domain where it helps coordinate assembly of the platform of the 30S subunit. This chain is Small ribosomal subunit protein uS8, found in Latilactobacillus sakei subsp. sakei (strain 23K) (Lactobacillus sakei subsp. sakei).